We begin with the raw amino-acid sequence, 742 residues long: F-box only protein 30 (742 aa).

The TRAF-type zinc finger occupies 49-108; that stretch reads EHRLLCPFERVPCLNSNFGCPFTLARNKVAEHLEMCPASVVCCTMEWNRWPVSYSDRKSY. The disordered stretch occupies residues 214–242; sequence SLQGTTNEMDEESNRESSQDRNAKDQDHL. Residues 225 to 242 show a composition bias toward basic and acidic residues; the sequence is ESNRESSQDRNAKDQDHL. At Ser-379 the chain carries Phosphoserine. The 47-residue stretch at 607–653 folds into the F-box domain; that stretch reads SDHLSSLPFEVLQHIAGFLDGFSLCQLACVSRLMRDICGSLLQSRGM.

As to quaternary structure, part of a SCF (SKP1-cullin-F-box) protein ligase complex. Interacts with SKP1, CUL1 and RBX1/ROC1. Post-translationally, auto-ubiquitinated. May be neddylated. Neddylation may be required for E3 ligase activity.

Its pathway is protein modification; protein ubiquitination. Its function is as follows. Substrate-recognition component of the SCF (SKP1-CUL1-F-box protein)-type E3 ubiquitin ligase complex. Required for muscle atrophy following denervation. This chain is F-box only protein 30 (Fbxo30), found in Rattus norvegicus (Rat).